Consider the following 280-residue polypeptide: Bis(5'-nucleosyl)-tetraphosphatase, symmetrical (280 aa).

Belongs to the Ap4A hydrolase family.

It carries out the reaction P(1),P(4)-bis(5'-adenosyl) tetraphosphate + H2O = 2 ADP + 2 H(+). Its function is as follows. Hydrolyzes diadenosine 5',5'''-P1,P4-tetraphosphate to yield ADP. This Shigella flexneri serotype 5b (strain 8401) protein is Bis(5'-nucleosyl)-tetraphosphatase, symmetrical.